Consider the following 147-residue polypeptide: Probable WRKY transcription factor 45 (147 aa).

The interval 21 to 52 (TEFHGVDNSAQPTTSSEEKPRSKKKKKEREAR) is disordered. Residues 59-124 (SQVDILDDGY…YQGVHTHAVD (66 aa)) constitute a DNA-binding region (WRKY). Zn(2+)-binding residues include Cys90, Cys95, His119, and His121.

Belongs to the WRKY group I family.

The protein resides in the nucleus. In terms of biological role, transcription factor. Interacts specifically with the W box (5'-(T)TGAC[CT]-3'), a frequently occurring elicitor-responsive cis-acting element. The sequence is that of Probable WRKY transcription factor 45 (WRKY45) from Arabidopsis thaliana (Mouse-ear cress).